Here is a 341-residue protein sequence, read N- to C-terminus: L-threonine 3-dehydrogenase (341 aa).

Cys38 lines the Zn(2+) pocket. Residues Thr40 and His43 each act as charge relay system in the active site. 6 residues coordinate Zn(2+): His63, Glu64, Cys93, Cys96, Cys99, and Cys107. NAD(+) contacts are provided by residues Ile175, Asp195, Arg200, 262 to 264 (LGI), and 286 to 287 (IY).

This sequence belongs to the zinc-containing alcohol dehydrogenase family. Homotetramer. It depends on Zn(2+) as a cofactor.

It is found in the cytoplasm. It carries out the reaction L-threonine + NAD(+) = (2S)-2-amino-3-oxobutanoate + NADH + H(+). The protein operates within amino-acid degradation; L-threonine degradation via oxydo-reductase pathway; glycine from L-threonine: step 1/2. Functionally, catalyzes the NAD(+)-dependent oxidation of L-threonine to 2-amino-3-ketobutyrate. This is L-threonine 3-dehydrogenase from Salmonella gallinarum (strain 287/91 / NCTC 13346).